We begin with the raw amino-acid sequence, 428 residues long: Adenylosuccinate synthetase (428 aa).

GTP-binding positions include Gly11 to Lys17 and Gly39 to Thr41. The active-site Proton acceptor is the Asp12. Mg(2+) contacts are provided by Asp12 and Gly39. IMP contacts are provided by residues Asp12–Lys15, Asn37–His40, Thr130, Arg144, Asn226, Thr241, and Arg305. His40 acts as the Proton donor in catalysis. Substrate is bound at residue Val301–Arg307. Residues Arg307, Lys333–Asp335, and Gly415–Gly417 each bind GTP.

The protein belongs to the adenylosuccinate synthetase family. Homodimer. The cofactor is Mg(2+).

It localises to the cytoplasm. The catalysed reaction is IMP + L-aspartate + GTP = N(6)-(1,2-dicarboxyethyl)-AMP + GDP + phosphate + 2 H(+). The protein operates within purine metabolism; AMP biosynthesis via de novo pathway; AMP from IMP: step 1/2. In terms of biological role, plays an important role in the de novo pathway and in the salvage pathway of purine nucleotide biosynthesis. Catalyzes the first committed step in the biosynthesis of AMP from IMP. The polypeptide is Adenylosuccinate synthetase (Candida albicans (strain SC5314 / ATCC MYA-2876) (Yeast)).